A 206-amino-acid chain; its full sequence is Thymidylate kinase (206 aa).

10 to 17 (GIDGAGKS) serves as a coordination point for ATP.

The protein belongs to the thymidylate kinase family.

The enzyme catalyses dTMP + ATP = dTDP + ADP. In terms of biological role, phosphorylation of dTMP to form dTDP in both de novo and salvage pathways of dTTP synthesis. The protein is Thymidylate kinase of Neisseria meningitidis serogroup C / serotype 2a (strain ATCC 700532 / DSM 15464 / FAM18).